We begin with the raw amino-acid sequence, 659 residues long: Threonine--tRNA ligase (659 aa).

Residues V7 to T70 form the TGS domain. The segment at D255–P557 is catalytic. C353, H404, and H534 together coordinate Zn(2+).

This sequence belongs to the class-II aminoacyl-tRNA synthetase family. Homodimer. Requires Zn(2+) as cofactor.

Its subcellular location is the cytoplasm. It carries out the reaction tRNA(Thr) + L-threonine + ATP = L-threonyl-tRNA(Thr) + AMP + diphosphate + H(+). Functionally, catalyzes the attachment of threonine to tRNA(Thr) in a two-step reaction: L-threonine is first activated by ATP to form Thr-AMP and then transferred to the acceptor end of tRNA(Thr). Also edits incorrectly charged L-seryl-tRNA(Thr). In Chlorobium phaeobacteroides (strain BS1), this protein is Threonine--tRNA ligase.